Reading from the N-terminus, the 549-residue chain is Zinc finger protein 266 (549 aa).

In terms of domain architecture, KRAB spans 1 to 42 (MLENYKNLATVGYQLFKPSLISWLEQEESRTVQRGDFQASEW). Residues 156 to 178 (FDCSDSGKSFINHSHLQGHLRTH) form a C2H2-type 1; degenerate zinc finger. The C2H2-type 2; degenerate zinc-finger motif lies at 184–206 (HEWKECGRGFIHSTDLAVRIQTH). C2H2-type zinc fingers lie at residues 212 to 234 (YKCK…MGTH), 240 to 262 (YECK…RKTH), 268 to 290 (YKCK…MKIH), 296 to 318 (YECK…LKTH), 324 to 346 (FECK…FRIH), 352 to 374 (YKCK…ARTH), 380 to 402 (YECK…TRTH), 408 to 430 (FECV…LRIH), 436 to 458 (FECL…MRTH), 464 to 486 (FTCM…MRIH), 492 to 514 (YKCK…ERTH), and 520 to 542 (YECK…ERRH). The interval 530–549 (SSSSSFRNHERRHADERLSA) is disordered.

Belongs to the krueppel C2H2-type zinc-finger protein family.

Its subcellular location is the nucleus. Its function is as follows. May be involved in transcriptional regulation. This chain is Zinc finger protein 266 (ZNF266), found in Homo sapiens (Human).